Consider the following 240-residue polypeptide: Coiled-coil domain-containing protein 152 (240 aa).

The stretch at 55 to 223 (MQTKEVAMKQ…LEQRLSVSKD (169 aa)) forms a coiled coil.

In Bos taurus (Bovine), this protein is Coiled-coil domain-containing protein 152 (CCDC152).